The primary structure comprises 274 residues: 3-methyl-2-oxobutanoate hydroxymethyltransferase (274 aa).

Mg(2+) is bound by residues aspartate 49 and aspartate 88. 3-methyl-2-oxobutanoate-binding positions include 49 to 50 (DS), aspartate 88, and lysine 118. Glutamate 120 contributes to the Mg(2+) binding site. The active-site Proton acceptor is glutamate 187.

This sequence belongs to the PanB family. As to quaternary structure, homodecamer; pentamer of dimers. It depends on Mg(2+) as a cofactor.

Its subcellular location is the cytoplasm. The enzyme catalyses 3-methyl-2-oxobutanoate + (6R)-5,10-methylene-5,6,7,8-tetrahydrofolate + H2O = 2-dehydropantoate + (6S)-5,6,7,8-tetrahydrofolate. It functions in the pathway cofactor biosynthesis; (R)-pantothenate biosynthesis; (R)-pantoate from 3-methyl-2-oxobutanoate: step 1/2. In terms of biological role, catalyzes the reversible reaction in which hydroxymethyl group from 5,10-methylenetetrahydrofolate is transferred onto alpha-ketoisovalerate to form ketopantoate. The chain is 3-methyl-2-oxobutanoate hydroxymethyltransferase from Nitrobacter winogradskyi (strain ATCC 25391 / DSM 10237 / CIP 104748 / NCIMB 11846 / Nb-255).